A 312-amino-acid chain; its full sequence is Lichenase-2 (312 aa).

Residues 1–6 form the signal peptide; that stretch reads PPSVES. Glu-99 acts as the Proton donor in catalysis. N-linked (GlcNAc...) asparagine glycosylation is present at Asn-196. The active-site Nucleophile is Glu-238.

Belongs to the glycosyl hydrolase 17 family.

It carries out the reaction Hydrolysis of (1-&gt;4)-beta-D-glucosidic linkages in beta-D-glucans containing (1-&gt;3)- and (1-&gt;4)-bonds.. The protein operates within glycan metabolism; beta-D-glucan degradation. Its function is as follows. Functions in plant cell wall hydrolysis during mobilization of the endosperm in germinating grain or during the growth of vegetative tissues. This chain is Lichenase-2, found in Hordeum vulgare (Barley).